Here is a 187-residue protein sequence, read N- to C-terminus: KS71A fimbrillin (187 aa).

Residues 1-21 (MIKSVIAGAVAMAVVSFGANA) form the signal peptide. Cysteines 43 and 82 form a disulfide.

This sequence belongs to the fimbrial protein family.

The protein resides in the fimbrium. Fimbriae (also called pili), polar filaments radiating from the surface of the bacterium to a length of 0.5-1.5 micrometers and numbering 100-300 per cell, enable bacteria to colonize the epithelium of specific host organs. In Escherichia coli, this protein is KS71A fimbrillin (KS71A).